The sequence spans 360 residues: Photosystem II protein D1 2 (360 aa).

Helical transmembrane passes span 29–46 (YIGW…AATT), 118–133 (HFLT…EWEL), and 142–156 (WICL…AATA). Position 118 (H118) interacts with chlorophyll a. Position 126 (Y126) interacts with pheophytin a. 2 residues coordinate [CaMn4O5] cluster: D170 and E189. A helical transmembrane segment spans residues 197–218 (FHMLGVAGVFGGSLFSAMHGSL). H198 contributes to the chlorophyll a binding site. A quinone-binding positions include H215 and 264–265 (SF). H215 contributes to the Fe cation binding site. H272 is a binding site for Fe cation. A helical membrane pass occupies residues 274–288 (FLAAWPVIGIWFTAL). The [CaMn4O5] cluster site is built by H332, E333, D342, and A344. The propeptide occupies 345–360 (AGEVAPVALTAPAING).

The protein belongs to the reaction center PufL/M/PsbA/D family. PSII is composed of 1 copy each of membrane proteins PsbA, PsbB, PsbC, PsbD, PsbE, PsbF, PsbH, PsbI, PsbJ, PsbK, PsbL, PsbM, PsbT, PsbX, PsbY, PsbZ, Psb30/Ycf12, peripheral proteins PsbO, CyanoQ (PsbQ), PsbU, PsbV and a large number of cofactors. It forms dimeric complexes. Requires The D1/D2 heterodimer binds P680, chlorophylls that are the primary electron donor of PSII, and subsequent electron acceptors. It shares a non-heme iron and each subunit binds pheophytin, quinone, additional chlorophylls, carotenoids and lipids. D1 provides most of the ligands for the Mn4-Ca-O5 cluster of the oxygen-evolving complex (OEC). There is also a Cl(-1) ion associated with D1 and D2, which is required for oxygen evolution. The PSII complex binds additional chlorophylls, carotenoids and specific lipids. as cofactor. Post-translationally, tyr-161 forms a radical intermediate that is referred to as redox-active TyrZ, YZ or Y-Z. In terms of processing, C-terminally processed by CtpA; processing is essential to allow assembly of the oxygen-evolving complex and thus photosynthetic growth.

Its subcellular location is the cellular thylakoid membrane. It catalyses the reaction 2 a plastoquinone + 4 hnu + 2 H2O = 2 a plastoquinol + O2. In terms of biological role, photosystem II (PSII) is a light-driven water:plastoquinone oxidoreductase that uses light energy to abstract electrons from H(2)O, generating O(2) and a proton gradient subsequently used for ATP formation. It consists of a core antenna complex that captures photons, and an electron transfer chain that converts photonic excitation into a charge separation. The D1/D2 (PsbA/PsbD) reaction center heterodimer binds P680, the primary electron donor of PSII as well as several subsequent electron acceptors. This chain is Photosystem II protein D1 2, found in Trichormus variabilis (strain ATCC 29413 / PCC 7937) (Anabaena variabilis).